The sequence spans 1129 residues: ISWI chromatin-remodeling complex ATPase ISW1 (1129 aa).

The disordered stretch occupies residues 144 to 177; sequence KANGKGKGKHQDVRRRKTEHEEDAELLKEEDSDD. The segment covering 147–160 has biased composition (basic residues); that stretch reads GKGKGKHQDVRRRK. Acidic residues predominate over residues 164–177; that stretch reads EEDAELLKEEDSDD. The region spanning 208–373 is the Helicase ATP-binding domain; the sequence is VSLHKNKIAG…WALLNFLLPD (166 aa). ATP is bound at residue 221–228; it reads DEMGLGKT. Residues 324–327 carry the DEAH box motif; the sequence is DEAH. One can recognise a Helicase C-terminal domain in the interval 506-657; that stretch reads VLDKLLKKLK…QLVIQQNRTS (152 aa). The disordered stretch occupies residues 683 to 705; it reads FKSGTSTGSAGTPEPGSGEKGDD. At threonine 694 the chain carries Phosphothreonine. The residue at position 846 (serine 846) is a Phosphoserine. 2 consecutive SANT domains span residues 882–935 and 988–1052; these read EGFT…SNIE and NKRT…LLQC. The segment covering 1073 to 1108 has biased composition (basic and acidic residues); sequence KEDENGKRIREEFADQTANEKENVDGVESKKAKIED. Positions 1073–1129 are disordered; it reads KEDENGKRIREEFADQTANEKENVDGVESKKAKIEDTSNVGTEQLVAEKIPENETTH.

The protein belongs to the SNF2/RAD54 helicase family. ISWI subfamily. As to quaternary structure, component of the ISW1A complex, which at least consists of ISW1 and IOC3. Component of the ISW1B complex, which at least consists of ISW1, IOC2 and IOC4.

Its subcellular location is the nucleus. Functionally, catalytic component of ISW1-type complexes, which act by remodeling the chromatin by catalyzing an ATP-dependent alteration in the structure of nucleosomal DNA. They are involved in coordinating transcriptional repression, activation and elongation phases. The ISW1A complex represses gene expression at initiation through specific positioning of a promoter proximal dinucleosome. The ISW1B complex acts within coding regions to control the amount of RNA polymerase II released into productive elongation and to coordinate elongation with termination and pre-mRNA processing. The sequence is that of ISWI chromatin-remodeling complex ATPase ISW1 (ISW1) from Saccharomyces cerevisiae (strain ATCC 204508 / S288c) (Baker's yeast).